Here is a 250-residue protein sequence, read N- to C-terminus: 5'-nucleotidase SurE (250 aa).

A divalent metal cation contacts are provided by aspartate 8, aspartate 9, serine 39, and asparagine 95.

The protein belongs to the SurE nucleotidase family. A divalent metal cation serves as cofactor.

The protein localises to the cytoplasm. It catalyses the reaction a ribonucleoside 5'-phosphate + H2O = a ribonucleoside + phosphate. Its function is as follows. Nucleotidase that shows phosphatase activity on nucleoside 5'-monophosphates. The polypeptide is 5'-nucleotidase SurE (Syntrophobacter fumaroxidans (strain DSM 10017 / MPOB)).